Reading from the N-terminus, the 476-residue chain is Glucose-1-phosphate adenylyltransferase (476 aa).

Residues Y114, G179, 194-195 (EK), and S212 each bind alpha-D-glucose 1-phosphate.

Belongs to the bacterial/plant glucose-1-phosphate adenylyltransferase family. In terms of assembly, homotetramer.

It carries out the reaction alpha-D-glucose 1-phosphate + ATP + H(+) = ADP-alpha-D-glucose + diphosphate. Its pathway is glycan biosynthesis; glycogen biosynthesis. In terms of biological role, involved in the biosynthesis of ADP-glucose, a building block required for the elongation reactions to produce glycogen. Catalyzes the reaction between ATP and alpha-D-glucose 1-phosphate (G1P) to produce pyrophosphate and ADP-Glc. This is Glucose-1-phosphate adenylyltransferase from Yersinia pestis.